Reading from the N-terminus, the 630-residue chain is Mesothelin (630 aa).

Residues 1 to 36 (MALPTARPLLGSCGTPALGSLLFLLFSLGWVQPSRT) form the signal peptide. Asn-57 is a glycosylation site (N-linked (GlcNAc...) asparagine). Position 200 is a phosphoserine; by FAM20C (Ser-200). The interval 262 to 286 (SIPQGIVAAWRQRSSRDPSWRQPER) is required for megakaryocyte-potentiating factor activity. Cys-302 and Cys-326 are disulfide-bonded. Residues Asn-388, Asn-496, and Asn-523 are each glycosylated (N-linked (GlcNAc...) asparagine). A lipid anchor (GPI-anchor amidated serine) is attached at Ser-606. A propeptide spans 607 to 630 (GTPCLLGPGPVLTVLALLLASTLA) (removed in mature form).

Belongs to the mesothelin family. As to quaternary structure, interacts with MUC16. Post-translationally, both MPF and the cleaved form of mesothelin are N-glycosylated. In terms of processing, proteolytically cleaved by a furin-like convertase to generate megakaryocyte-potentiating factor (MPF), and the cleaved form of mesothelin. In terms of tissue distribution, expressed in lung. Expressed at low levels in heart, placenta and kidney. Expressed in mesothelial cells. Highly expressed in mesotheliomas, ovarian cancers, and some squamous cell carcinomas (at protein level).

Its subcellular location is the cell membrane. The protein localises to the golgi apparatus. The protein resides in the secreted. In terms of biological role, membrane-anchored forms may play a role in cellular adhesion. Megakaryocyte-potentiating factor (MPF) potentiates megakaryocyte colony formation in vitro. The sequence is that of Mesothelin (MSLN) from Homo sapiens (Human).